The following is a 342-amino-acid chain: Paired box protein Pax-9 (342 aa).

The paired DNA-binding region spans 4 to 130; sequence AFGEVNQLGG…SSISRILRNK (127 aa). The tract at residues 7 to 63 is PAI subdomain; it reads EVNQLGGVFVNGRPLPNAIRLRIVELAQLGIRPCDISRQLRVSHGCVSKILARYNET. Residues 82 to 130 form an RED subdomain region; the sequence is TVVKHIRTYKQRDPGIFAWEIRDRLLADGVCDKYNVPSVSSISRILRNK. An interaction with KDM5B region spans residues 168 to 189; it reads AAAAKVPTPPGVPAIPGSVALP.

As to quaternary structure, interacts with KDM5B. In the embryo, expressed in pharyngeal pouches and derivatives, developing vertebral column, tail, head and limbs.

It is found in the nucleus. Functionally, transcription factor required for normal development of thymus, parathyroid glands, ultimobranchial bodies, teeth, skeletal elements of skull and larynx as well as distal limbs. The polypeptide is Paired box protein Pax-9 (Pax9) (Mus musculus (Mouse)).